Here is a 237-residue protein sequence, read N- to C-terminus: Ribonuclease PH (237 aa).

Phosphate contacts are provided by residues Arg-86 and 124-126 (GTR).

The protein belongs to the RNase PH family. Homohexameric ring arranged as a trimer of dimers.

It catalyses the reaction tRNA(n+1) + phosphate = tRNA(n) + a ribonucleoside 5'-diphosphate. Its function is as follows. Phosphorolytic 3'-5' exoribonuclease that plays an important role in tRNA 3'-end maturation. Removes nucleotide residues following the 3'-CCA terminus of tRNAs; can also add nucleotides to the ends of RNA molecules by using nucleoside diphosphates as substrates, but this may not be physiologically important. Probably plays a role in initiation of 16S rRNA degradation (leading to ribosome degradation) during starvation. The chain is Ribonuclease PH from Erythrobacter litoralis (strain HTCC2594).